Consider the following 481-residue polypeptide: UDP-glucose 6-dehydrogenase (481 aa).

NAD(+)-binding positions include glycine 16 to glycine 21, aspartate 41, lysine 46, valine 94 to threonine 98, serine 135 to threonine 136, and glutamate 172. Substrate is bound by residues glutamate 168–glutamate 172, lysine 227–asparagine 231, arginine 267, and glutamine 274–glycine 280. Cysteine 283 serves as the catalytic Nucleophile. An NAD(+)-binding site is contributed by cysteine 283 to lysine 286. Phenylalanine 345–lysine 346 contributes to the substrate binding site. Arginine 353 provides a ligand contact to NAD(+). Residue arginine 447 coordinates substrate.

Belongs to the UDP-glucose/GDP-mannose dehydrogenase family. In terms of tissue distribution, expressed in the vulva and in oocytes.

It carries out the reaction UDP-alpha-D-glucose + 2 NAD(+) + H2O = UDP-alpha-D-glucuronate + 2 NADH + 3 H(+). The protein operates within nucleotide-sugar biosynthesis; UDP-alpha-D-glucuronate biosynthesis; UDP-alpha-D-glucuronate from UDP-alpha-D-glucose: step 1/1. Its function is as follows. Involved in the biosynthesis of glycosaminoglycans; hyaluronan, chondroitin sulfate, and heparan sulfate. This Caenorhabditis elegans protein is UDP-glucose 6-dehydrogenase (sqv-4).